An 882-amino-acid chain; its full sequence is DNA mismatch repair protein MutS (882 aa).

656 to 663 (GPNASGKS) lines the ATP pocket.

It belongs to the DNA mismatch repair MutS family.

Functionally, this protein is involved in the repair of mismatches in DNA. It is possible that it carries out the mismatch recognition step. This protein has a weak ATPase activity. This Synechococcus elongatus (strain ATCC 33912 / PCC 7942 / FACHB-805) (Anacystis nidulans R2) protein is DNA mismatch repair protein MutS.